Consider the following 328-residue polypeptide: 17-beta-hydroxysteroid dehydrogenase type 1 (328 aa).

Residues 10 to 38 (GCSS…ATLR) and Asp66 contribute to the NADP(+) site. Residue Ser135 is modified to Phosphoserine; by PKA. Ser143 serves as a coordination point for substrate. Catalysis depends on Tyr156, which acts as the Proton acceptor. Position 160 (Lys160) interacts with NADP(+). Residues 291-328 (KAEAGAEAGGGAGPGAEDEAGRGAVGDPELGDPPAAPQ) form a disordered region.

This sequence belongs to the short-chain dehydrogenases/reductases (SDR) family. As to quaternary structure, homodimer. Exists predominantly as a homodimer but also exits as monomer.

The protein localises to the cytoplasm. The catalysed reaction is 17beta-estradiol + NAD(+) = estrone + NADH + H(+). It catalyses the reaction 17beta-estradiol + NADP(+) = estrone + NADPH + H(+). It carries out the reaction testosterone + NADP(+) = androst-4-ene-3,17-dione + NADPH + H(+). Its pathway is steroid biosynthesis; estrogen biosynthesis. In terms of biological role, favors the reduction of estrogens and androgens. Converts estrone (E1) to a more potent estrogen, 17beta-estradiol (E2). Also has 20-alpha-HSD activity. Uses preferentially NADH. The sequence is that of 17-beta-hydroxysteroid dehydrogenase type 1 from Homo sapiens (Human).